The primary structure comprises 141 residues: Putative nickel-responsive regulator (141 aa).

Ni(2+) is bound by residues His-80, His-91, His-93, and Cys-99.

Belongs to the transcriptional regulatory CopG/NikR family. It depends on Ni(2+) as a cofactor.

Its function is as follows. Transcriptional regulator. The sequence is that of Putative nickel-responsive regulator from Methanococcus maripaludis (strain DSM 14266 / JCM 13030 / NBRC 101832 / S2 / LL).